The sequence spans 327 residues: Solute-binding protein SPO1773 (327 aa).

The signal sequence occupies residues 1–26 (MTISFKGLARGVACAALVLAALPAAA). Residues 39 to 41 (HTW), Arg150, 170 to 172 (RIT), and Asp211 each bind 3-hydroxybenzoate.

The protein belongs to the bacterial solute-binding protein 7 family. The complex is comprised of an extracytoplasmic solute-binding protein and a heteromeric permease formed by two transmembrane proteins.

Its subcellular location is the periplasm. In terms of biological role, solute-binding protein that binds 3,4-dihydroxybenzoate and 3-hydroxybenzoate (in vitro). Probably part of a tripartite ATP-independent periplasmic (TRAP) transport system that mediates solute transport into the cytoplasm. In Ruegeria pomeroyi (strain ATCC 700808 / DSM 15171 / DSS-3) (Silicibacter pomeroyi), this protein is Solute-binding protein SPO1773.